Reading from the N-terminus, the 468-residue chain is Probable ubiquitin carboxyl-terminal hydrolase R319 (468 aa).

Residues 42 to 462 (TGIMNLGNTC…NAYILFYIRS (421 aa)) enclose the USP domain. Cys-51 (nucleophile) is an active-site residue. His-420 acts as the Proton acceptor in catalysis.

The protein belongs to the peptidase C19 family.

It carries out the reaction Thiol-dependent hydrolysis of ester, thioester, amide, peptide and isopeptide bonds formed by the C-terminal Gly of ubiquitin (a 76-residue protein attached to proteins as an intracellular targeting signal).. The chain is Probable ubiquitin carboxyl-terminal hydrolase R319 from Acanthamoeba polyphaga (Amoeba).